We begin with the raw amino-acid sequence, 151 residues long: Transcription antitermination protein NusB (151 aa).

This sequence belongs to the NusB family.

Functionally, involved in transcription antitermination. Required for transcription of ribosomal RNA (rRNA) genes. Binds specifically to the boxA antiterminator sequence of the ribosomal RNA (rrn) operons. This chain is Transcription antitermination protein NusB, found in Photobacterium profundum (strain SS9).